A 115-amino-acid chain; its full sequence is MSSPSSPFREQSFLCAAGDAGEESRVQVLKNEVRRGSPVLLGWVEQAYADKCVCGPSAPPAPTPPSLSQRVMCNDLFKVNPFQLQQFRADPSTASLLLCPGGLDHKLNLRGKAWG.

Not detectable in normal kidney and liver. Up-regulated in chronic and acute allograft rejection: expressed in the inflammatory infiltrate and in tubular epithelial cells.

The protein resides in the nucleus. Functionally, inhibits the cytotoxic effects of TNF-alpha and overexpressed TNF receptor adapters TRADD, FADD, and RIPK1. Involved in TGF-beta1 inhibition of IkappaB-alpha expression and suppression of TNF-mediated IkappaB-alpha degradation. The chain is Putative TGFB1-induced anti-apoptotic factor 1 (MYO18A) from Homo sapiens (Human).